A 373-amino-acid chain; its full sequence is MTVAINNETVVLTPNEDDVQVNKGKTLETSFPPLKGDDLKWFPRSSLPAEIPAIDIGKVSTKEELEQFLVDIRKSGLFYIVNHGVPEEVSINVYNAFREFISTTTEEERMKYYTDTHFQNGGYVPFQGSSIRGGNLGKPQKDHVVKYFWRGPEVINRTPNEKFTEAHNMHHTETFKVAEKVIRTIFKALKLRFPDFDPMEFENTINSKKMFFTNRIYPQAEPSDEEEITHRLVPHLDTSFITLANQVPADNGFQGLFVETGDGKKVKVPGIRNSYLVFIGQSLSYLTKNYLPSALHGVDKPPSDLFEGSERSSLITFYEPAEIIIPSKNINPNPEETSESCPFFYDIGLTVNDPEGTTWDFVKNKFITGYYAD.

The Fe2OG dioxygenase domain maps to 204–320; it reads TINSKKMFFT…RSSLITFYEP (117 aa). Histidine 235, aspartate 237, and histidine 296 together coordinate Fe cation. Arginine 311 provides a ligand contact to 2-oxoglutarate.

Belongs to the iron/ascorbate-dependent oxidoreductase family. Fe(2+) serves as cofactor.

It catalyses the reaction N-(7'-carboxy-7'-demethylgeranyl)-L-glutamate + 2-oxoglutarate + O2 = isodomoate A + succinate + CO2 + H2O. It carries out the reaction N-geranyl-L-glutamate + 2-oxoglutarate + O2 = dainate A + succinate + CO2 + H2O. It functions in the pathway secondary metabolite biosynthesis. Its function is as follows. Iron/ascorbate-dependent oxidoreductase: part of the gene cluster that mediates the biosynthesis of domoic acid (DA) and derivatives, natural products with neurochemical activity acting as ionotropic glutamate receptor (iGluR) agonists, thus being neurotoxins causing amnesic shellfish poisoning (ASP). Catalyzes the conversion of 7'-N-carboxy-L-geranyl-L-glutamic acid (cNGG) to isodomoic acid-A. Also mediates the conversion of N-geranyl-L-glutamic acid (L-NGG) to dainic acid A. This Pseudo-nitzschia multiseries (Marine planktonic diatom) protein is Alpha-ketoglutarate dependent kainoid synthase.